The following is a 147-amino-acid chain: Globin, polymeric component P2 (147 aa).

The region spanning 2–146 (PLTADQVAAL…ISDALVAGLE (145 aa)) is the Globin domain. Histidine 96 serves as a coordination point for heme b.

This sequence belongs to the globin family. In terms of assembly, polymer.

This Glycera dibranchiata (Bloodworm) protein is Globin, polymeric component P2.